We begin with the raw amino-acid sequence, 554 residues long: Cytochrome c oxidase subunit 1-alpha (554 aa).

A helical membrane pass occupies residues 26 to 56 (KDIGVLYLFTAGLAGLISVTLTVYMRMELQH). A disulfide bridge connects residues Cys63 and Cys77. The next 6 helical transmembrane spans lie at 81–118 (AHLW…LHIG), 127–148 (LNNL…SLLS), 175–203 (AMDL…TFLN), 215–248 (PLFA…DRNF), 260–295 (DPVL…STFA), and 301–319 (GYLP…GFIV). A Fe(II)-heme a-binding site is contributed by His91. Positions 273 and 277 each coordinate Cu cation. The 1'-histidyl-3'-tyrosine (His-Tyr) cross-link spans 273–277 (HPEVY). Positions 322 and 323 each coordinate Cu cation. 5 helical membrane-spanning segments follow: residues 331–359 (LTQQ…IATM), 367–390 (KTPM…VIAQ), 399–425 (DTYY…GTYY), 436–463 (PEWA…FLGR), and 478–508 (SYWN…TLFA). A heme a3-binding site is contributed by His406. His408 serves as a coordination point for Fe(II)-heme a.

The protein belongs to the heme-copper respiratory oxidase family. Cu(2+) serves as cofactor. The cofactor is heme.

It localises to the cell inner membrane. It catalyses the reaction 4 Fe(II)-[cytochrome c] + O2 + 8 H(+)(in) = 4 Fe(III)-[cytochrome c] + 2 H2O + 4 H(+)(out). It participates in energy metabolism; oxidative phosphorylation. Functionally, subunit I and II form the functional core of the enzyme complex. Electrons originating in cytochrome c are transferred via heme a and Cu(A) to the binuclear center formed by heme a3 and Cu(B). This cytochrome c oxidase shows proton pump activity across the membrane in addition to the electron transfer. The polypeptide is Cytochrome c oxidase subunit 1-alpha (ctaDI) (Paracoccus denitrificans).